The sequence spans 303 residues: Acidic endochitinase WIN6.2B (303 aa).

Positions 1–21 (MSVWAFAFFSLFLSLSVRGSA) are cleaved as a signal peptide. The region spanning 22–62 (EQCGQQAGDALCPGGLCCSSYGWCGTTADYCGDGCQSQCDG) is the Chitin-binding type-1 domain. 4 disulfides stabilise this stretch: cysteine 24–cysteine 39, cysteine 33–cysteine 45, cysteine 38–cysteine 52, and cysteine 56–cysteine 60. The segment at 82–303 (DGYLSDIIPE…YGLLGLKDTM (222 aa)) is chitinase. Residue glutamate 150 is the Proton donor of the active site. Residues cysteine 253 and cysteine 286 are joined by a disulfide bond.

It belongs to the glycosyl hydrolase 19 family. Chitinase class I subfamily.

It carries out the reaction Random endo-hydrolysis of N-acetyl-beta-D-glucosaminide (1-&gt;4)-beta-linkages in chitin and chitodextrins.. Its function is as follows. Defense against chitin-containing fungal pathogens. This chain is Acidic endochitinase WIN6.2B, found in Populus trichocarpa (Western balsam poplar).